The chain runs to 233 residues: Biosynthetic peptidoglycan transglycosylase (233 aa).

Residues 7–27 (VFTWLAKLVLGLFFASILSVV) form a helical membrane-spanning segment.

This sequence belongs to the glycosyltransferase 51 family.

It is found in the cell inner membrane. The catalysed reaction is [GlcNAc-(1-&gt;4)-Mur2Ac(oyl-L-Ala-gamma-D-Glu-L-Lys-D-Ala-D-Ala)](n)-di-trans,octa-cis-undecaprenyl diphosphate + beta-D-GlcNAc-(1-&gt;4)-Mur2Ac(oyl-L-Ala-gamma-D-Glu-L-Lys-D-Ala-D-Ala)-di-trans,octa-cis-undecaprenyl diphosphate = [GlcNAc-(1-&gt;4)-Mur2Ac(oyl-L-Ala-gamma-D-Glu-L-Lys-D-Ala-D-Ala)](n+1)-di-trans,octa-cis-undecaprenyl diphosphate + di-trans,octa-cis-undecaprenyl diphosphate + H(+). Its pathway is cell wall biogenesis; peptidoglycan biosynthesis. Its function is as follows. Peptidoglycan polymerase that catalyzes glycan chain elongation from lipid-linked precursors. This chain is Biosynthetic peptidoglycan transglycosylase, found in Shewanella oneidensis (strain ATCC 700550 / JCM 31522 / CIP 106686 / LMG 19005 / NCIMB 14063 / MR-1).